The following is a 1022-amino-acid chain: MLPYQAAVAMDYAGYQRQPTPGHPGSHMATMGSLGMPAVPFTHSWMVPTQDLCAMPPYNKMTGHQQPPGAGMHAQQQPLEPGILELRKEKSRDAARSRRGKENYEFYELAKMLPLPAAITSQLDKASIIRLTISYLKLRDFSGHGDPPWTREASSSSKLKSAAIRRSPAVDLFEQHQGTHILQSLDGFALAVAADGRFLYISETVSIYLGLSQVEMTGSSIFDYIHQADHSEIADQLGLSLTSGGGGGGGSSSSGGGGGGAGGGMASPTSGASDDGSGTHGTNNPDVAASMTQASTSGYKGYDRSFCVRMKSTLTKRGCHFKSSGYRASDATSNCNNGNNASNNAKNVKNPGSNYSVVLLLCKLRPQYTFSHSRKSQPPLLGMVALAIALPPPSVHEIRLECDMFVTRVNFDLRVAHCEPRVSDLLDYSPEDLVNKSLYSLCHAEDANRLRKSHSDLIEKGQVLTGYYRLMNKSGGYTWLQTCATVVCSTKNADEQNIICVNYVISNRENENMILDCCQLEPSPDSIKHEEGLGNDKSSGSPGGDASGEGNSHLSAGDMKLNSPKTDSEGHSHRGRGRSAAASHGSSMNSLTMIKDSPTPLGVEIDSGVLPTTVATPVPAATPPVQSTKRKRKTKASQHAEDQGQEQVISEQPLPKLPTMEQRDQQPRSRLPSIVDEQPSSAADSAVKDLEQAMSKHLPSPAAVVSVAPPNTDFSADSLLKQQQQQQQLDPNEKSSTIQWIGTPYQQPPAPMPATALLRQLYANRESVIRATARQTPTGVGPGVFYGDQQTGPLPTPPGSESSYENQYLQLHSAASGGHPGGQKTSADAFTNLVSTYGGYHSSIDYHNAMTPPSSVSPRDSNQPGKAAPVLASNGGYDYAPDPLRGQYATSSGDVVPATLPLKPQASYTATMHPSGSTTTEGGVTYSNLDQPQYFAPHSSFHLYHKGSPASGWYSTPSXVVDDQGQVPPSCQDQYHHHHHHHHHQDGSAGSSASQASERWDFVGALGKVARMFFSARKGNPG.

Residues 86 to 139 form the bHLH domain; sequence LRKEKSRDAARSRRGKENYEFYELAKMLPLPAAITSQLDKASIIRLTISYLKLR. Residues 174-244 enclose the PAS 1 domain; it reads EQHQGTHILQ…DQLGLSLTSG (71 aa). The tract at residues 239–289 is disordered; it reads LSLTSGGGGGGGSSSSGGGGGGAGGGMASPTSGASDDGSGTHGTNNPDVAA. The span at 243–265 shows a compositional bias: gly residues; the sequence is SGGGGGGGSSSSGGGGGGAGGGM. Residues 280–289 show a composition bias toward polar residues; sequence HGTNNPDVAA. Residues 391–461 form the PAS 2 domain; it reads PPPSVHEIRL…KSHSDLIEKG (71 aa). Positions 465-508 constitute a PAC domain; the sequence is TGYYRLMNKSGGYTWLQTCATVVCSTKNADEQNIICVNYVISNR. Disordered stretches follow at residues 525–686, 849–896, and 962–996; these read DSIK…ADSA, AMTP…GDVV, and DDQG…ASQA. Composition is skewed to low complexity over residues 578–587 and 611–625; these read RSAAASHGSS and PTTV…TPPV. The Nuclear localization signal signature appears at 629–636; it reads KRKRKTKA. S673 carries the post-translational modification Phosphoserine; by PKB/Akt1. Residues 851–864 are compositionally biased toward polar residues; that stretch reads TPPSSVSPRDSNQP. Low complexity predominate over residues 987 to 996; it reads GSAGSSASQA.

In terms of assembly, efficient DNA binding requires dimerization with another bHLH protein. Heterodimer with tgo. Post-translationally, ser-673 phosphorylation by PKB/Akt1 is required for nuclear targeting and transcriptional activity. In terms of tissue distribution, trachea, salivary gland ducts, posterior spiracles (Filzkoeper primordia) and a subset of cells in the CNS.

The protein localises to the nucleus. Functionally, transcription factor, master regulator of tracheal cell fates in the embryo, necessary for the development of the salivary gland duct, Malpighian tubules and the posterior spiracles. It may induce a general fate of branched tubular structures of epithelial origin. Functions with tgo to regulate expression of btl. The polypeptide is Protein trachealess (trh) (Drosophila melanogaster (Fruit fly)).